A 482-amino-acid chain; its full sequence is Membrane-bound lytic murein transglycosylase F (482 aa).

The signal sequence occupies residues 1–18 (MKGLFIRIVLAICLSLWA). A non-LT domain region spans residues 19 to 266 (IDMVFPWQQI…RIEEKYFNHL (248 aa)). Positions 267 to 482 (NQFDYVDTRS…ISTQTQQEQR (216 aa)) are LT domain. Glutamate 311 is a catalytic residue.

In the N-terminal section; belongs to the bacterial solute-binding protein 3 family. The protein in the C-terminal section; belongs to the transglycosylase Slt family.

The protein resides in the cell outer membrane. It catalyses the reaction Exolytic cleavage of the (1-&gt;4)-beta-glycosidic linkage between N-acetylmuramic acid (MurNAc) and N-acetylglucosamine (GlcNAc) residues in peptidoglycan, from either the reducing or the non-reducing ends of the peptidoglycan chains, with concomitant formation of a 1,6-anhydrobond in the MurNAc residue.. In terms of biological role, murein-degrading enzyme that degrades murein glycan strands and insoluble, high-molecular weight murein sacculi, with the concomitant formation of a 1,6-anhydromuramoyl product. Lytic transglycosylases (LTs) play an integral role in the metabolism of the peptidoglycan (PG) sacculus. Their lytic action creates space within the PG sacculus to allow for its expansion as well as for the insertion of various structures such as secretion systems and flagella. This chain is Membrane-bound lytic murein transglycosylase F, found in Histophilus somni (strain 129Pt) (Haemophilus somnus).